A 188-amino-acid polypeptide reads, in one-letter code: Elongation factor P (188 aa).

The protein belongs to the elongation factor P family.

Its subcellular location is the cytoplasm. Its pathway is protein biosynthesis; polypeptide chain elongation. Functionally, involved in peptide bond synthesis. Stimulates efficient translation and peptide-bond synthesis on native or reconstituted 70S ribosomes in vitro. Probably functions indirectly by altering the affinity of the ribosome for aminoacyl-tRNA, thus increasing their reactivity as acceptors for peptidyl transferase. The protein is Elongation factor P of Leptospira biflexa serovar Patoc (strain Patoc 1 / Ames).